The sequence spans 246 residues: MITHKFEHPLNEKTRIYLRVESLLRQLHLSSAFSDAQQYQLFFRSIFDLIEIFEQIQLKSELAKDIEKQRVTYKSWLDVEGVDQEMLTSLLNDISHIYRELMQAERFGQSLKEDRFLSAIRQRFNLPGGSCCFDLPALHYWLHLPLDKRVRDAETWMDSLQPLYEALTLWLKLTRETGHFKDQIARTGFFQSDADEANILRLSIPMQYGAYPMISGHKNRFAIKFMSFETGQACTQDIEFELAICS.

It belongs to the ZapD family. As to quaternary structure, interacts with FtsZ.

Its subcellular location is the cytoplasm. In terms of biological role, cell division factor that enhances FtsZ-ring assembly. Directly interacts with FtsZ and promotes bundling of FtsZ protofilaments, with a reduction in FtsZ GTPase activity. In Vibrio atlanticus (strain LGP32) (Vibrio splendidus (strain Mel32)), this protein is Cell division protein ZapD.